The sequence spans 156 residues: MPRKGPVPKRDVLPDPIYNSKLVTRLINKIMIDGKKGKAQKILYTAFDIIRERTGKDPMEVFEQALKNVMPVLEVRARRVGGANYQVPVEVRPERRTTLGLRWLVNYARLRGEKTMEERLANEIMDAANNTGAAVKKREDTHKMAEANKAFAHYRW.

This sequence belongs to the universal ribosomal protein uS7 family. In terms of assembly, part of the 30S ribosomal subunit. Contacts proteins S9 and S11.

Its function is as follows. One of the primary rRNA binding proteins, it binds directly to 16S rRNA where it nucleates assembly of the head domain of the 30S subunit. Is located at the subunit interface close to the decoding center, probably blocks exit of the E-site tRNA. In Anoxybacillus flavithermus (strain DSM 21510 / WK1), this protein is Small ribosomal subunit protein uS7.